The primary structure comprises 384 residues: 1-deoxy-D-xylulose 5-phosphate reductoisomerase (384 aa).

7 residues coordinate NADPH: Thr10, Gly11, Ser12, Ile13, Arg37, Asn38, and Asn124. Position 125 (Lys125) interacts with 1-deoxy-D-xylulose 5-phosphate. Glu126 is a binding site for NADPH. Asp150 serves as a coordination point for Mn(2+). 1-deoxy-D-xylulose 5-phosphate contacts are provided by Ser151, Glu152, Ser176, and His199. Residue Glu152 participates in Mn(2+) binding. Position 205 (Gly205) interacts with NADPH. Ser212, Asn217, Lys218, and Glu221 together coordinate 1-deoxy-D-xylulose 5-phosphate. Residue Glu221 coordinates Mn(2+).

Belongs to the DXR family. Mg(2+) serves as cofactor. It depends on Mn(2+) as a cofactor.

The catalysed reaction is 2-C-methyl-D-erythritol 4-phosphate + NADP(+) = 1-deoxy-D-xylulose 5-phosphate + NADPH + H(+). It functions in the pathway isoprenoid biosynthesis; isopentenyl diphosphate biosynthesis via DXP pathway; isopentenyl diphosphate from 1-deoxy-D-xylulose 5-phosphate: step 1/6. In terms of biological role, catalyzes the NADPH-dependent rearrangement and reduction of 1-deoxy-D-xylulose-5-phosphate (DXP) to 2-C-methyl-D-erythritol 4-phosphate (MEP). The chain is 1-deoxy-D-xylulose 5-phosphate reductoisomerase from Clostridium perfringens (strain ATCC 13124 / DSM 756 / JCM 1290 / NCIMB 6125 / NCTC 8237 / Type A).